Reading from the N-terminus, the 315-residue chain is uncharacterized protein (315 aa).

Helical transmembrane passes span 19-39 (IGAG…GNVF), 56-76 (TVLV…LHSF), and 81-101 (PLKK…ISLI). Over residues 154 to 171 (EDSASSGRTSSSVNQPIQ) the composition is skewed to polar residues. The disordered stretch occupies residues 154–214 (EDSASSGRTS…EREARAQEHD (61 aa)). Basic and acidic residues predominate over residues 203-214 (GGEREARAQEHD).

The protein belongs to the ATPase C chain family.

Its subcellular location is the mitochondrion membrane. This is an uncharacterized protein from Arabidopsis thaliana (Mouse-ear cress).